We begin with the raw amino-acid sequence, 279 residues long: Tryptophan synthase alpha chain (279 aa).

Catalysis depends on proton acceptor residues Glu-50 and Asp-61.

It belongs to the TrpA family. Tetramer of two alpha and two beta chains.

It catalyses the reaction (1S,2R)-1-C-(indol-3-yl)glycerol 3-phosphate + L-serine = D-glyceraldehyde 3-phosphate + L-tryptophan + H2O. The protein operates within amino-acid biosynthesis; L-tryptophan biosynthesis; L-tryptophan from chorismate: step 5/5. Functionally, the alpha subunit is responsible for the aldol cleavage of indoleglycerol phosphate to indole and glyceraldehyde 3-phosphate. The sequence is that of Tryptophan synthase alpha chain from Brucella melitensis biotype 2 (strain ATCC 23457).